Here is a 432-residue protein sequence, read N- to C-terminus: UDP-N-acetylmuramate--L-alanine ligase (432 aa).

109 to 115 (GAHGKST) provides a ligand contact to ATP.

The protein belongs to the MurCDEF family.

It localises to the cytoplasm. It catalyses the reaction UDP-N-acetyl-alpha-D-muramate + L-alanine + ATP = UDP-N-acetyl-alpha-D-muramoyl-L-alanine + ADP + phosphate + H(+). It functions in the pathway cell wall biogenesis; peptidoglycan biosynthesis. Cell wall formation. The sequence is that of UDP-N-acetylmuramate--L-alanine ligase from Campylobacter jejuni subsp. jejuni serotype O:2 (strain ATCC 700819 / NCTC 11168).